A 988-amino-acid chain; its full sequence is Bifunctional glutamine synthetase adenylyltransferase/adenylyl-removing enzyme (988 aa).

The adenylyl removase stretch occupies residues 1–474 (MSSSAIDADI…HYSKLFEGDP (474 aa)). The tract at residues 480-988 (LPIDYAGGAE…FNRLIGGNGE (509 aa)) is adenylyl transferase.

Belongs to the GlnE family. Requires Mg(2+) as cofactor.

The catalysed reaction is [glutamine synthetase]-O(4)-(5'-adenylyl)-L-tyrosine + phosphate = [glutamine synthetase]-L-tyrosine + ADP. The enzyme catalyses [glutamine synthetase]-L-tyrosine + ATP = [glutamine synthetase]-O(4)-(5'-adenylyl)-L-tyrosine + diphosphate. Involved in the regulation of glutamine synthetase GlnA, a key enzyme in the process to assimilate ammonia. When cellular nitrogen levels are high, the C-terminal adenylyl transferase (AT) inactivates GlnA by covalent transfer of an adenylyl group from ATP to specific tyrosine residue of GlnA, thus reducing its activity. Conversely, when nitrogen levels are low, the N-terminal adenylyl removase (AR) activates GlnA by removing the adenylyl group by phosphorolysis, increasing its activity. The regulatory region of GlnE binds the signal transduction protein PII (GlnB) which indicates the nitrogen status of the cell. The sequence is that of Bifunctional glutamine synthetase adenylyltransferase/adenylyl-removing enzyme from Rhodopseudomonas palustris (strain HaA2).